The following is a 144-amino-acid chain: D-aminoacyl-tRNA deacylase (144 aa).

The Gly-cisPro motif, important for rejection of L-amino acids motif lies at 136–137; that stretch reads GP.

Belongs to the DTD family. In terms of assembly, homodimer.

The protein localises to the cytoplasm. It catalyses the reaction glycyl-tRNA(Ala) + H2O = tRNA(Ala) + glycine + H(+). The enzyme catalyses a D-aminoacyl-tRNA + H2O = a tRNA + a D-alpha-amino acid + H(+). Functionally, an aminoacyl-tRNA editing enzyme that deacylates mischarged D-aminoacyl-tRNAs. Also deacylates mischarged glycyl-tRNA(Ala), protecting cells against glycine mischarging by AlaRS. Acts via tRNA-based rather than protein-based catalysis; rejects L-amino acids rather than detecting D-amino acids in the active site. By recycling D-aminoacyl-tRNA to D-amino acids and free tRNA molecules, this enzyme counteracts the toxicity associated with the formation of D-aminoacyl-tRNA entities in vivo and helps enforce protein L-homochirality. The chain is D-aminoacyl-tRNA deacylase from Haemophilus influenzae (strain PittGG).